The sequence spans 204 residues: Urease accessory protein UreG 1 (204 aa).

Residue 14-21 participates in GTP binding; it reads GPVGSGKT.

The protein belongs to the SIMIBI class G3E GTPase family. UreG subfamily. In terms of assembly, homodimer. UreD, UreF and UreG form a complex that acts as a GTP-hydrolysis-dependent molecular chaperone, activating the urease apoprotein by helping to assemble the nickel containing metallocenter of UreC. The UreE protein probably delivers the nickel.

The protein resides in the cytoplasm. Facilitates the functional incorporation of the urease nickel metallocenter. This process requires GTP hydrolysis, probably effectuated by UreG. In Methylorubrum populi (strain ATCC BAA-705 / NCIMB 13946 / BJ001) (Methylobacterium populi), this protein is Urease accessory protein UreG 1.